We begin with the raw amino-acid sequence, 460 residues long: Kynurenine 3-monooxygenase (460 aa).

FAD is bound by residues V13, 32–34, and A53; that span reads DFR. L-kynurenine-binding residues include R83 and Y97. Residues R109, L133, Y195, D314, and 325 to 328 each bind FAD; that span reads QGMN. 2 residues coordinate L-kynurenine: N373 and Y408.

The protein belongs to the aromatic-ring hydroxylase family. KMO subfamily. Requires FAD as cofactor.

It localises to the mitochondrion outer membrane. It catalyses the reaction L-kynurenine + NADPH + O2 + H(+) = 3-hydroxy-L-kynurenine + NADP(+) + H2O. The protein operates within cofactor biosynthesis; NAD(+) biosynthesis; quinolinate from L-kynurenine: step 1/3. Functionally, catalyzes the hydroxylation of L-kynurenine (L-Kyn) to form 3-hydroxy-L-kynurenine (L-3OHKyn). Required for synthesis of quinolinic acid. This is Kynurenine 3-monooxygenase from Saccharomyces cerevisiae (strain ATCC 204508 / S288c) (Baker's yeast).